A 130-amino-acid chain; its full sequence is Universal stress protein MSMEG_4207 (130 aa).

Residue Lys104 is modified to N6-acetyllysine.

The protein belongs to the universal stress protein A family. Acetylated on Lys-104 by PatA in the presence of acetyl-CoA as an acetyl donor.

The sequence is that of Universal stress protein MSMEG_4207 from Mycolicibacterium smegmatis (strain ATCC 700084 / mc(2)155) (Mycobacterium smegmatis).